Reading from the N-terminus, the 331-residue chain is Threonine-phosphate decarboxylase (331 aa).

Lys192 is subject to N6-(pyridoxal phosphate)lysine.

This sequence belongs to the class-I pyridoxal-phosphate-dependent aminotransferase family. In terms of assembly, homodimer. The cofactor is pyridoxal 5'-phosphate.

The protein resides in the cytoplasm. The enzyme catalyses O-phospho-L-threonine + H(+) = (R)-1-aminopropan-2-yl phosphate + CO2. It functions in the pathway cofactor biosynthesis; adenosylcobalamin biosynthesis. Decarboxylates L-threonine-O-3-phosphate to yield (R)-1-amino-2-propanol O-2-phosphate, the precursor for the linkage between the nucleotide loop and the corrin ring in cobalamin. The protein is Threonine-phosphate decarboxylase (cobC) of Pseudomonas aeruginosa (strain ATCC 15692 / DSM 22644 / CIP 104116 / JCM 14847 / LMG 12228 / 1C / PRS 101 / PAO1).